Reading from the N-terminus, the 262-residue chain is Tryptophan synthase alpha chain (262 aa).

Active-site proton acceptor residues include Glu-48 and Asp-59.

It belongs to the TrpA family. In terms of assembly, tetramer of two alpha and two beta chains.

The enzyme catalyses (1S,2R)-1-C-(indol-3-yl)glycerol 3-phosphate + L-serine = D-glyceraldehyde 3-phosphate + L-tryptophan + H2O. It participates in amino-acid biosynthesis; L-tryptophan biosynthesis; L-tryptophan from chorismate: step 5/5. Its function is as follows. The alpha subunit is responsible for the aldol cleavage of indoleglycerol phosphate to indole and glyceraldehyde 3-phosphate. This chain is Tryptophan synthase alpha chain, found in Helicobacter pylori (strain ATCC 700392 / 26695) (Campylobacter pylori).